Reading from the N-terminus, the 183-residue chain is Ribosome rescue factor SmrB (183 aa).

The region spanning 98-173 is the Smr domain; it reads LDLHGLTQLQ…GDAALLVLIE (76 aa).

Belongs to the SmrB family. In terms of assembly, associates with collided ribosomes, but not with correctly translating polysomes.

Acts as a ribosome collision sensor. Detects stalled/collided disomes (pairs of ribosomes where the leading ribosome is stalled and a second ribosome has collided with it) and endonucleolytically cleaves mRNA at the 5' boundary of the stalled ribosome. Stalled/collided disomes form a new interface (primarily via the 30S subunits) that binds SmrB. Cleaved mRNA becomes available for tmRNA ligation, leading to ribosomal subunit dissociation and rescue of stalled ribosomes. The polypeptide is Ribosome rescue factor SmrB (Salmonella arizonae (strain ATCC BAA-731 / CDC346-86 / RSK2980)).